The sequence spans 299 residues: Sulfotransferase 1B1 (299 aa).

A 3'-phosphoadenylyl sulfate-binding site is contributed by 48 to 53 (KSGTTW). 107–109 (KTH) serves as a coordination point for substrate. His109 serves as the catalytic Proton acceptor. 3'-phosphoadenylyl sulfate contacts are provided by residues Arg131, Ser139, Tyr194, 228 to 233 (TSFEMM), and 258 to 260 (RKG).

This sequence belongs to the sulfotransferase 1 family. Liver specific.

The protein resides in the cytoplasm. It catalyses the reaction a phenol + 3'-phosphoadenylyl sulfate = an aryl sulfate + adenosine 3',5'-bisphosphate + H(+). The catalysed reaction is 3,3',5-triiodo-L-thyronine + 3'-phosphoadenylyl sulfate = 3,3',5-triiodo-L-thyronine sulfate + adenosine 3',5'-bisphosphate + H(+). The enzyme catalyses 3,3',5'-triiodo-L-thyronine + 3'-phosphoadenylyl sulfate = 3,3',5'-triiodo-L-thyronine sulfate + adenosine 3',5'-bisphosphate + H(+). It carries out the reaction 3,3'-diiodo-L-thyronine + 3'-phosphoadenylyl sulfate = 3,3'-diiodo-L-thyronine sulfate + adenosine 3',5'-bisphosphate + H(+). It catalyses the reaction dopamine + 3'-phosphoadenylyl sulfate = dopamine 3-O-sulfate + adenosine 3',5'-bisphosphate + H(+). The catalysed reaction is dopamine + 3'-phosphoadenylyl sulfate = dopamine 4-O-sulfate + adenosine 3',5'-bisphosphate + H(+). The enzyme catalyses 4-ethylphenol + 3'-phosphoadenylyl sulfate = 4-ethylphenyl sulfate + adenosine 3',5'-bisphosphate + H(+). In terms of biological role, sulfotransferase that utilizes 3'-phospho-5'-adenylyl sulfate (PAPS) as sulfonate donor to catalyze the sulfate conjugation of dopamine, small phenols such as 1-naphthol and p-nitrophenol and thyroid hormones, including 3,3'-diiodothyronine, triidothyronine (T3) and reverse triiodothyronine (rT3). May play a role in gut microbiota-host metabolic interaction. O-sulfonates 4-ethylphenol (4-EP), a dietary tyrosine-derived metabolite produced by gut bacteria. The product 4-EPS crosses the blood-brain barrier and may negatively regulate oligodendrocyte maturation and myelination, affecting the functional connectivity of different brain regions associated with the limbic system. The chain is Sulfotransferase 1B1 from Mus musculus (Mouse).